The following is a 551-amino-acid chain: Cleavage and polyadenylation specificity factor subunit 6 (551 aa).

The RRM domain maps to Ile-81–Lys-161. Phosphothreonine is present on Thr-157. Residues Met-169 to Met-180 show a composition bias toward polar residues. 2 disordered regions span residues Met-169 to Ser-410 and Leu-477 to Arg-551. 3 stretches are compositionally biased toward pro residues: residues Thr-237–Gly-265, Gly-285–Ala-366, and Gly-377–Pro-388. 2 stretches are compositionally biased toward basic and acidic residues: residues Pro-389–Ala-404 and Ser-489–Arg-503. Phosphoserine is present on residues Ser-494, Ser-500, Ser-511, Ser-513, and Ser-525. Basic residues predominate over residues Glu-504–Arg-514. The segment covering Asp-515–Arg-551 has biased composition (basic and acidic residues).

It belongs to the RRM CPSF6/7 family. Component of the cleavage factor Im (CFIm) complex.

Its subcellular location is the nucleus. The protein resides in the nucleoplasm. The protein localises to the nucleus speckle. It is found in the cytoplasm. Its function is as follows. Component of the cleavage factor Im (CFIm) complex that functions as an activator of the pre-mRNA 3'-end cleavage and polyadenylation processing required for the maturation of pre-mRNA into functional mRNAs. CFIm contributes to the recruitment of multiprotein complexes on specific sequences on the pre-mRNA 3'-end, so called cleavage and polyadenylation signals (pA signals). Most pre-mRNAs contain multiple pA signals, resulting in alternative cleavage and polyadenylation (APA) producing mRNAs with variable 3'-end formation. The CFIm complex acts as a key regulator of cleavage and polyadenylation site choice during APA through its binding to 5'-UGUA-3' elements localized in the 3'-untranslated region (UTR) for a huge number of pre-mRNAs. Plays a role in mRNA export. This is Cleavage and polyadenylation specificity factor subunit 6 from Gallus gallus (Chicken).